Reading from the N-terminus, the 540-residue chain is Chaperonin GroEL 2/3 (540 aa).

ATP-binding positions include 30-33 (TLGP), Lys51, 87-91 (DGTTT), Gly415, 479-481 (NAA), and Asp495.

Belongs to the chaperonin (HSP60) family. In terms of assembly, forms a cylinder of 14 subunits composed of two heptameric rings stacked back-to-back. Interacts with the co-chaperonin GroES.

Its subcellular location is the cytoplasm. It carries out the reaction ATP + H2O + a folded polypeptide = ADP + phosphate + an unfolded polypeptide.. Together with its co-chaperonin GroES, plays an essential role in assisting protein folding. The GroEL-GroES system forms a nano-cage that allows encapsulation of the non-native substrate proteins and provides a physical environment optimized to promote and accelerate protein folding. The protein is Chaperonin GroEL 2/3 of Paraburkholderia xenovorans (strain LB400).